The following is a 447-amino-acid chain: NADP-specific glutamate dehydrogenase (447 aa).

Residues lysine 92, glutamine 113, and lysine 116 each coordinate substrate. Lysine 128 functions as the Proton donor in the catalytic mechanism. Glycine 167 is a binding site for substrate. NADP(+) is bound by residues threonine 211 and asparagine 242. Serine 380 contacts substrate.

The protein belongs to the Glu/Leu/Phe/Val dehydrogenases family. Homohexamer.

It carries out the reaction L-glutamate + NADP(+) + H2O = 2-oxoglutarate + NH4(+) + NADPH + H(+). Functionally, catalyzes the reversible oxidative deamination of glutamate to alpha-ketoglutarate and ammonia. In Salmonella typhimurium (strain LT2 / SGSC1412 / ATCC 700720), this protein is NADP-specific glutamate dehydrogenase (gdhA).